A 335-amino-acid polypeptide reads, in one-letter code: 4-hydroxy-3-methylbut-2-enyl diphosphate reductase 2 (335 aa).

[4Fe-4S] cluster is bound at residue C37. Residues H66 and H99 each coordinate (2E)-4-hydroxy-3-methylbut-2-enyl diphosphate. The dimethylallyl diphosphate site is built by H66 and H99. The isopentenyl diphosphate site is built by H66 and H99. Residue C121 participates in [4Fe-4S] cluster binding. H149 is a binding site for (2E)-4-hydroxy-3-methylbut-2-enyl diphosphate. H149 is a binding site for dimethylallyl diphosphate. H149 is an isopentenyl diphosphate binding site. Catalysis depends on E151, which acts as the Proton donor. T189 contacts (2E)-4-hydroxy-3-methylbut-2-enyl diphosphate. [4Fe-4S] cluster is bound at residue C219. Positions 247, 248, 249, and 292 each coordinate (2E)-4-hydroxy-3-methylbut-2-enyl diphosphate. The dimethylallyl diphosphate site is built by S247, S248, N249, and S292. 4 residues coordinate isopentenyl diphosphate: S247, S248, N249, and S292.

Belongs to the IspH family. [4Fe-4S] cluster serves as cofactor.

The enzyme catalyses isopentenyl diphosphate + 2 oxidized [2Fe-2S]-[ferredoxin] + H2O = (2E)-4-hydroxy-3-methylbut-2-enyl diphosphate + 2 reduced [2Fe-2S]-[ferredoxin] + 2 H(+). It catalyses the reaction dimethylallyl diphosphate + 2 oxidized [2Fe-2S]-[ferredoxin] + H2O = (2E)-4-hydroxy-3-methylbut-2-enyl diphosphate + 2 reduced [2Fe-2S]-[ferredoxin] + 2 H(+). The protein operates within isoprenoid biosynthesis; dimethylallyl diphosphate biosynthesis; dimethylallyl diphosphate from (2E)-4-hydroxy-3-methylbutenyl diphosphate: step 1/1. It functions in the pathway isoprenoid biosynthesis; isopentenyl diphosphate biosynthesis via DXP pathway; isopentenyl diphosphate from 1-deoxy-D-xylulose 5-phosphate: step 6/6. Its function is as follows. Catalyzes the conversion of 1-hydroxy-2-methyl-2-(E)-butenyl 4-diphosphate (HMBPP) into a mixture of isopentenyl diphosphate (IPP) and dimethylallyl diphosphate (DMAPP). Acts in the terminal step of the DOXP/MEP pathway for isoprenoid precursor biosynthesis. Has a higher activity compared with LytB2. Is essential for M.tuberculosis growth in vitro. In Mycobacterium tuberculosis (strain ATCC 25618 / H37Rv), this protein is 4-hydroxy-3-methylbut-2-enyl diphosphate reductase 2.